A 330-amino-acid chain; its full sequence is B-cell receptor CD22 (330 aa).

Positions 1-17 (MHLLGPWLLLLEYLAFS) are cleaved as a signal peptide. Residues 18 to 136 (DSSKWAFEHP…MERIHLNVSE (119 aa)) enclose the Ig-like V-type domain. At 18–330 (DSSKWAFEHP…VFLQVQYAPE (313 aa)) the chain is on the extracellular side. 3 disulfides stabilise this stretch: cysteine 37/cysteine 165, cysteine 42/cysteine 100, and cysteine 159/cysteine 217. Residues asparagine 65, asparagine 99, and asparagine 110 are each glycosylated (N-linked (GlcNAc...) asparagine). Position 118 (arginine 118) interacts with N-acetylneuraminate. Asparagine 133, asparagine 162, asparagine 187, and asparagine 229 each carry an N-linked (GlcNAc...) asparagine glycan. 2 consecutive Ig-like C2-type domains span residues 141-233 (PHIQ…DTVQ) and 240-324 (PKLK…VFLQ). Residues cysteine 263 and cysteine 307 are joined by a disulfide bond.

This sequence belongs to the immunoglobulin superfamily. SIGLEC (sialic acid binding Ig-like lectin) family. In terms of assembly, predominantly monomer of isoform CD22-beta. Also found as heterodimer of isoform CD22-beta and a shorter isoform. Interacts with PTPN6/SHP-1, LYN, SYK, PIK3R1/PIK3R2 and PLCG1 upon phosphorylation. Interacts with GRB2, INPP5D and SHC1 upon phosphorylation. May form a complex with INPP5D/SHIP, GRB2 and SHC1.

The protein resides in the cell membrane. In terms of biological role, most highly expressed siglec (sialic acid-binding immunoglobulin-like lectin) on B-cells that plays a role in various aspects of B-cell biology including differentiation, antigen presentation, and trafficking to bone marrow. Binds to alpha 2,6-linked sialic acid residues of surface molecules such as CD22 itself, CD45 and IgM in a cis configuration. Can also bind to ligands on other cells as an adhesion molecule in a trans configuration. Acts as an inhibitory coreceptor on the surface of B-cells and inhibits B-cell receptor induced signaling, characterized by inhibition of the calcium mobilization and cellular activation. Mechanistically, the immunoreceptor tyrosine-based inhibitory motif domain is phosphorylated by the Src kinase LYN, which in turn leads to the recruitment of the protein tyrosine phosphatase 1/PTPN6, leading to the negative regulation of BCR signaling. If this negative signaling from is of sufficient strength, apoptosis of the B-cell can be induced. This chain is B-cell receptor CD22, found in Pongo pygmaeus (Bornean orangutan).